Reading from the N-terminus, the 562-residue chain is Berberine bridge enzyme-like C-1 (562 aa).

Positions 1 to 19 (MFPLIILISFSFTFLSASA) are cleaved as a signal peptide. Residues Asn29 and Asn41 are each glycosylated (N-linked (GlcNAc...) asparagine). Cys33 and Cys90 form a disulfide bridge. The FAD-binding PCMH-type domain maps to 68 to 244 (NMPKPTVIIL…YAWKIRLVKV (177 aa)). A Pros-8alpha-FAD histidine modification is found at His105. N-linked (GlcNAc...) asparagine glycans are attached at residues Asn359, Asn498, and Asn558.

It belongs to the oxygen-dependent FAD-linked oxidoreductase family. The cofactor is FAD. As to expression, mostly expressed in roots.

Its subcellular location is the vacuole. It functions in the pathway alkaloid biosynthesis; nicotine biosynthesis. Its function is as follows. Involved in the biosynthesis of pyridine alkaloid natural products, leading mainly to the production of anabasine, anatabine, nicotine and nornicotine, effective deterrents against herbivores with antiparasitic and pesticide properties (neurotoxins); nornicotine serves as the precursor in the synthesis of the carcinogen compound N'-nitrosonornicotine (NNN). Catalyzes a late oxidation step subsequent to the pyridine ring condensation reaction in the biosynthesis of alkaloids. This chain is Berberine bridge enzyme-like C-1, found in Nicotiana tabacum (Common tobacco).